A 448-amino-acid chain; its full sequence is Exodeoxyribonuclease 7 large subunit (448 aa).

It belongs to the XseA family. In terms of assembly, heterooligomer composed of large and small subunits.

The protein localises to the cytoplasm. The enzyme catalyses Exonucleolytic cleavage in either 5'- to 3'- or 3'- to 5'-direction to yield nucleoside 5'-phosphates.. Bidirectionally degrades single-stranded DNA into large acid-insoluble oligonucleotides, which are then degraded further into small acid-soluble oligonucleotides. The chain is Exodeoxyribonuclease 7 large subunit from Tolumonas auensis (strain DSM 9187 / NBRC 110442 / TA 4).